Here is a 479-residue protein sequence, read N- to C-terminus: Endosomal/lysosomal proton channel TMEM175 (479 aa).

A disordered region spans residues 1-26; that stretch reads MSGPQAPEPTLEGQADASAGSPDEDA. The Cytoplasmic segment spans residues 1–33; sequence MSGPQAPEPTLEGQADASAGSPDEDAAEGIQHS. A helical transmembrane segment spans residues 34-56; the sequence is HRMLSFSDALLSIIATVMEFDKS. The RxxxFSD motif 1 signature appears at 35-41; the sequence is RMLSFSD. Residues 52–58 form a short helix H2-1 region; sequence EFDKSVQ. The Lumenal segment spans residues 57 to 64; that stretch reads VQRLLATR. The chain crosses the membrane as a helical span at residues 65 to 87; it reads IAVYLMTFLIVTVAWAAHTRLFQ. Residues 88–93 are Cytoplasmic-facing; sequence VVGKID. The helical transmembrane segment at 94–103 threads the bilayer; the sequence is DTLALLNLFS. Topologically, residues 104-113 are lumenal; it reads LMVTFPEVPL. A helical transmembrane segment spans residues 114–135; it reads GIFLFCMCVIAIGAVQALIVLY. Over 136 to 159 the chain is Cytoplasmic; sequence AFHFPHLLSPQIERSAHRGLYRQR. A helical membrane pass occupies residues 160–180; sequence VLGIIVRGPALCLAAAGFSLF. Residues 181 to 185 are Lumenal-facing; the sequence is FYPAS. The helical transmembrane segment at 186-205 threads the bilayer; that stretch reads YLLMAMVIVLPHVSKAAGWC. Topologically, residues 206 to 232 are cytoplasmic; it reads RAQLVGPREPPAHSVEVFTFDLHEPLS. The chain crosses the membrane as a helical span at residues 233–257; sequence KERVEAFSDGVYAIVATLLILDICE. The RxxxFSD motif 2 motif lies at 235–241; sequence RVEAFSD. The Lumenal portion of the chain corresponds to 258–284; sequence DNVPDAKDVKEKFQGSLVAALGESGPH. Residues 263-271 are short helix H1-2; the sequence is AKDVKEKFQ. Residues 273 to 279 form a short helix H2-2 region; the sequence is SLVAALG. A helical transmembrane segment spans residues 285–307; it reads FLAYFGSFATVGLLWFAHHSLFL. Topologically, residues 308 to 313 are cytoplasmic; the sequence is HIRRAT. Residues 314-335 form a helical membrane-spanning segment; that stretch reads QPMGLLNTLSLAFVGGLPLAYQ. Over 336 to 350 the chain is Lumenal; it reads QTSAFTKQPRDELES. Residues 351-371 form a helical membrane-spanning segment; the sequence is VRISCAIIFLASIFQFAIWTT. At 372–391 the chain is on the cytoplasmic side; it reads ALLQEGETLQPSARFGGREH. Residues 392–415 form a helical membrane-spanning segment; the sequence is AFMFAKLALYPCASLLAFACTCVL. The Lumenal segment spans residues 416–417; it reads SS. A helical transmembrane segment spans residues 418–444; the sequence is FSTAIFHAMQIAVPFAFLLLRLLVRLA. Residues 445–479 lie on the Cytoplasmic side of the membrane; that stretch reads LAGLRALRGLVGPVLARPAPGAADEAQSPLLPAPC.

It belongs to the TMEM175 family. As to quaternary structure, homodimer. Interacts with AKT (AKT1, AKT2 or AKT3); leading to formation of the lysoK(GF) complex, which activates the channel. Interacts with LAMP1; inhibiting the proton channel activity of TMEM175. Interacts with LAMP2; inhibiting the proton channel activity of TMEM175.

The protein localises to the endosome membrane. It is found in the lysosome membrane. It carries out the reaction H(+)(in) = H(+)(out). It catalyses the reaction K(+)(in) = K(+)(out). Its activity is regulated as follows. Active at low pH (under pH 4.6): proton channel activity is activated by luminal side protons. Polyunsaturated fatty acids, such as arachidonic acid, also activate the channel activity. Proton channel activity is directly inhibited by LAMP1 or LAMP2, facilitating lysosomal acidification. Channel activity is activated following interaction with AKT (AKT1, AKT2 or AKT3): interaction promotes activation from closed to an open state. Activation by AKT is independent of AKT serine/threonine-protein kinase activity. Functionally, proton-activated proton channel that catalyzes proton efflux from endosomes and lysosomes to maintain a steady-state pH. Activated at low pH (under pH 4.6) by luminal side protons: selectively mediates lysosomal proton release from lysosomes, eliciting a proton leak that balances V-ATPase activity to maintain pH homeostasis. Regulation of lumenal pH stability is required for autophagosome-lysosome fusion. Also acts as a potassium channel at higher pH, regulating potassium conductance in endosomes and lysosomes. Constitutes the pore-forming subunit of the lysoK(GF) complex, a complex activated by extracellular growth factors. The lysoK(GF) complex is composed of TMEM175 and AKT (AKT1, AKT2 or AKT3), a major target of growth factor receptors: in the complex, TMEM175 channel is opened by conformational changes by AKT, leading to its activation. The lysoK(GF) complex is required to protect neurons against stress-induced damage. The polypeptide is Endosomal/lysosomal proton channel TMEM175 (Bos taurus (Bovine)).